A 416-amino-acid chain; its full sequence is GTPase ERA1, chloroplastic (416 aa).

Residues 1–53 (MELGLALRLVAPPPLLPCLSRRALSLPPDFVSSRVLRGRRIHASRLKHGAGVV) constitute a chloroplast transit peptide. The region spanning 117-287 (RSGYVAVLGK…KEWILSKLPL (171 aa)) is the Era-type G domain. The G1 stretch occupies residues 125-132 (GKPNVGKS). 125-132 (GKPNVGKS) is a binding site for GTP. Residues 151-155 (QTTRH) are G2. Residues 172-175 (DTPG) are G3. GTP-binding positions include 172–176 (DTPGV) and 237–240 (NKKD). Positions 237 to 240 (NKKD) are G4. Residues 266–268 (ISA) form a G5 region. Residues 318-395 (YRQEIPYSCQ…YLEVEVKVKE (78 aa)) enclose the KH type-2 domain.

This sequence belongs to the TRAFAC class TrmE-Era-EngA-EngB-Septin-like GTPase superfamily. Era GTPase family.

Its subcellular location is the plastid. It localises to the chloroplast stroma. It is found in the chloroplast nucleoid. Its function is as follows. Nuclear genome-encoded probable GTPase involved in ribosome biogenesis in chloroplasts. Plays a role in 16S rRNA maturation in plastids and may contribute to the assembly of the small (30S) ribosomal subunit. The polypeptide is GTPase ERA1, chloroplastic (Zea mays (Maize)).